The sequence spans 284 residues: Lipoyl synthase (284 aa).

7 residues coordinate [4Fe-4S] cluster: cysteine 38, cysteine 43, cysteine 49, cysteine 64, cysteine 68, cysteine 71, and serine 277. Residues 50–266 form the Radical SAM core domain; it reads WSRGTATFLL…RDEALGMGFS (217 aa).

Belongs to the radical SAM superfamily. Lipoyl synthase family. It depends on [4Fe-4S] cluster as a cofactor.

It localises to the cytoplasm. It carries out the reaction [[Fe-S] cluster scaffold protein carrying a second [4Fe-4S](2+) cluster] + N(6)-octanoyl-L-lysyl-[protein] + 2 oxidized [2Fe-2S]-[ferredoxin] + 2 S-adenosyl-L-methionine + 4 H(+) = [[Fe-S] cluster scaffold protein] + N(6)-[(R)-dihydrolipoyl]-L-lysyl-[protein] + 4 Fe(3+) + 2 hydrogen sulfide + 2 5'-deoxyadenosine + 2 L-methionine + 2 reduced [2Fe-2S]-[ferredoxin]. Its pathway is protein modification; protein lipoylation via endogenous pathway; protein N(6)-(lipoyl)lysine from octanoyl-[acyl-carrier-protein]: step 2/2. Its function is as follows. Catalyzes the radical-mediated insertion of two sulfur atoms into the C-6 and C-8 positions of the octanoyl moiety bound to the lipoyl domains of lipoate-dependent enzymes, thereby converting the octanoylated domains into lipoylated derivatives. In Chlorobium phaeovibrioides (strain DSM 265 / 1930) (Prosthecochloris vibrioformis (strain DSM 265)), this protein is Lipoyl synthase.